Consider the following 340-residue polypeptide: Ribonucleoside-diphosphate reductase small subunit (340 aa).

The chain crosses the membrane as a helical span at residues F180–Y200.

It belongs to the ribonucleoside diphosphate reductase small chain family. As to quaternary structure, heterotetramer composed of a homodimer of the large subunit (R1) and a homodimer of the small subunit (R2). Larger multisubunit protein complex are also active, composed of (R1)n(R2)n. Fe cation serves as cofactor.

Its subcellular location is the host membrane. It catalyses the reaction a 2'-deoxyribonucleoside 5'-diphosphate + [thioredoxin]-disulfide + H2O = a ribonucleoside 5'-diphosphate + [thioredoxin]-dithiol. Ribonucleoside-diphosphate reductase holoenzyme provides the precursors necessary for viral DNA synthesis. Allows virus growth in non-dividing cells, as well as reactivation from latency in infected hosts. Catalyzes the biosynthesis of deoxyribonucleotides from the corresponding ribonucleotides. This is Ribonucleoside-diphosphate reductase small subunit from Human herpesvirus 1 (strain 17) (HHV-1).